The following is a 501-amino-acid chain: Probable cytosol aminopeptidase (501 aa).

Positions 268 and 273 each coordinate Mn(2+). K280 is an active-site residue. The Mn(2+) site is built by D291, D350, and E352. The active site involves R354.

Belongs to the peptidase M17 family. Mn(2+) serves as cofactor.

The protein resides in the cytoplasm. The enzyme catalyses Release of an N-terminal amino acid, Xaa-|-Yaa-, in which Xaa is preferably Leu, but may be other amino acids including Pro although not Arg or Lys, and Yaa may be Pro. Amino acid amides and methyl esters are also readily hydrolyzed, but rates on arylamides are exceedingly low.. The catalysed reaction is Release of an N-terminal amino acid, preferentially leucine, but not glutamic or aspartic acids.. Functionally, presumably involved in the processing and regular turnover of intracellular proteins. Catalyzes the removal of unsubstituted N-terminal amino acids from various peptides. This is Probable cytosol aminopeptidase from Nitrosococcus oceani (strain ATCC 19707 / BCRC 17464 / JCM 30415 / NCIMB 11848 / C-107).